Reading from the N-terminus, the 234-residue chain is (5-formylfuran-3-yl)methyl phosphate synthase (234 aa).

K27 functions as the Schiff-base intermediate with substrate in the catalytic mechanism. K85 serves as the catalytic Proton acceptor.

The protein belongs to the MfnB family.

It carries out the reaction 2 D-glyceraldehyde 3-phosphate = 4-(hydroxymethyl)-2-furancarboxaldehyde phosphate + phosphate + 2 H2O. It participates in cofactor biosynthesis; methanofuran biosynthesis. Catalyzes the formation of 4-(hydroxymethyl)-2-furancarboxaldehyde phosphate (4-HFC-P) from two molecules of glyceraldehyde-3-P (GA-3-P). The sequence is that of (5-formylfuran-3-yl)methyl phosphate synthase from Methanosarcina barkeri (strain Fusaro / DSM 804).